The sequence spans 280 residues: MLIINDNNLSGLSLQRVNGTGELSVQFKDGRSRISRLYQEGAAKIRMPQAVTGPLEAILINTSGGLTGGDRLKWDVALDDGASAVITTQACERIYRSGGGEARIATRLKAAKGTRLAWLPQETILFNRSILSRRLDVELEEGAQMLVVEATVFGRLAMGERVVAARFADRWRVRLGGRVIHAEEFRLGPDVGAELQAPAVAGGACAMATVLMVCEQAGRHLETARAIIGEEGGCSLWRVGKASKLVVRLYAPDSYALRRRLCPLVALLNGKAGLPKVWTI.

It belongs to the UreD family. In terms of assembly, ureD, UreF and UreG form a complex that acts as a GTP-hydrolysis-dependent molecular chaperone, activating the urease apoprotein by helping to assemble the nickel containing metallocenter of UreC. The UreE protein probably delivers the nickel.

The protein resides in the cytoplasm. Required for maturation of urease via the functional incorporation of the urease nickel metallocenter. This is Urease accessory protein UreD 1 from Brucella canis (strain ATCC 23365 / NCTC 10854 / RM-666).